Reading from the N-terminus, the 549-residue chain is Probable acyl-activating enzyme 10 (549 aa).

This sequence belongs to the ATP-dependent AMP-binding enzyme family. In terms of tissue distribution, expressed at low levels in roots.

Its function is as follows. May act as an acid--thiol ligase that activates carboxylic acids by forming acyl-CoAs. The chain is Probable acyl-activating enzyme 10 (AEE10) from Arabidopsis thaliana (Mouse-ear cress).